The sequence spans 397 residues: ATP-dependent RNA helicase RhlB (397 aa).

Residues 9 to 37 (TRFHDFNLAPSLMHAIHDLGFPYCTPIQA) carry the Q motif motif. The Helicase ATP-binding domain maps to 40-220 (LGFTLRGQDA…KQWTVDPAIV (181 aa)). 53–60 (AQTGTGKT) provides a ligand contact to ATP. The DEAD box motif lies at 166–169 (DEAD). One can recognise a Helicase C-terminal domain in the interval 243-393 (DKYKLLYNLV…MPPAELLKPV (151 aa)).

Belongs to the DEAD box helicase family. RhlB subfamily. As to quaternary structure, component of the RNA degradosome, which is a multiprotein complex involved in RNA processing and mRNA degradation.

The protein resides in the cytoplasm. The catalysed reaction is ATP + H2O = ADP + phosphate + H(+). Its function is as follows. DEAD-box RNA helicase involved in RNA degradation. Has RNA-dependent ATPase activity and unwinds double-stranded RNA. This is ATP-dependent RNA helicase RhlB from Pseudomonas aeruginosa (strain UCBPP-PA14).